The sequence spans 490 residues: GTPase Der (490 aa).

EngA-type G domains follow at residues Met-1–Val-165 and Leu-227–Thr-400. Residues Gly-7–Ser-14, Asp-54–Val-58, Asn-117–Asp-120, Gly-233–Ser-240, Asp-280–Leu-284, and Asn-345–Asp-348 contribute to the GTP site. The region spanning Thr-401–Pro-485 is the KH-like domain.

The protein belongs to the TRAFAC class TrmE-Era-EngA-EngB-Septin-like GTPase superfamily. EngA (Der) GTPase family. As to quaternary structure, associates with the 50S ribosomal subunit.

Its function is as follows. GTPase that plays an essential role in the late steps of ribosome biogenesis. This Chlamydia trachomatis serovar A (strain ATCC VR-571B / DSM 19440 / HAR-13) protein is GTPase Der.